A 247-amino-acid polypeptide reads, in one-letter code: Eukaryotic translation initiation factor 3 subunit J (247 aa).

Disordered stretches follow at residues 1–64 (MADW…KTLK) and 77–101 (EEKR…EEQM). Over residues 24 to 45 (EGEDEDDDIKESWDDDDEDEKK) the composition is skewed to acidic residues. Residues 43–108 (EKKEDEAKNT…EQMAEKLRRQ (66 aa)) are a coiled coil.

This sequence belongs to the eIF-3 subunit J family. Component of the eukaryotic translation initiation factor 3 (eIF-3) complex.

The protein localises to the cytoplasm. Component of the eukaryotic translation initiation factor 3 (eIF-3) complex, which is involved in protein synthesis of a specialized repertoire of mRNAs and, together with other initiation factors, stimulates binding of mRNA and methionyl-tRNAi to the 40S ribosome. The eIF-3 complex specifically targets and initiates translation of a subset of mRNAs involved in cell proliferation. This Nematostella vectensis (Starlet sea anemone) protein is Eukaryotic translation initiation factor 3 subunit J.